The following is a 92-amino-acid chain: Protein OP-ORF (92 aa).

The stretch at 53 to 82 (KMLAATISILEEEVTELVTELNNTTNLTAK) forms a coiled coil.

The protein is Protein OP-ORF of Rice dwarf virus (isolate Fujian) (RDV).